The following is a 155-amino-acid chain: SsrA-binding protein (155 aa).

It belongs to the SmpB family.

The protein localises to the cytoplasm. Functionally, required for rescue of stalled ribosomes mediated by trans-translation. Binds to transfer-messenger RNA (tmRNA), required for stable association of tmRNA with ribosomes. tmRNA and SmpB together mimic tRNA shape, replacing the anticodon stem-loop with SmpB. tmRNA is encoded by the ssrA gene; the 2 termini fold to resemble tRNA(Ala) and it encodes a 'tag peptide', a short internal open reading frame. During trans-translation Ala-aminoacylated tmRNA acts like a tRNA, entering the A-site of stalled ribosomes, displacing the stalled mRNA. The ribosome then switches to translate the ORF on the tmRNA; the nascent peptide is terminated with the 'tag peptide' encoded by the tmRNA and targeted for degradation. The ribosome is freed to recommence translation, which seems to be the essential function of trans-translation. The sequence is that of SsrA-binding protein from Lactococcus lactis subsp. lactis (strain IL1403) (Streptococcus lactis).